A 336-amino-acid polypeptide reads, in one-letter code: Ferredoxin--NADP reductase (336 aa).

Positions 34, 42, 47, 87, 121, 286, and 326 each coordinate FAD.

This sequence belongs to the ferredoxin--NADP reductase type 2 family. In terms of assembly, homodimer. It depends on FAD as a cofactor.

It catalyses the reaction 2 reduced [2Fe-2S]-[ferredoxin] + NADP(+) + H(+) = 2 oxidized [2Fe-2S]-[ferredoxin] + NADPH. The polypeptide is Ferredoxin--NADP reductase (Leuconostoc mesenteroides subsp. mesenteroides (strain ATCC 8293 / DSM 20343 / BCRC 11652 / CCM 1803 / JCM 6124 / NCDO 523 / NBRC 100496 / NCIMB 8023 / NCTC 12954 / NRRL B-1118 / 37Y)).